Reading from the N-terminus, the 152-residue chain is UPF0266 membrane protein YobD (152 aa).

The next 3 membrane-spanning stretches (helical) occupy residues Leu6 to Met26, Val45 to His65, and Ala67 to Ile87.

Belongs to the UPF0266 family.

Its subcellular location is the cell inner membrane. The sequence is that of UPF0266 membrane protein YobD from Salmonella dublin (strain CT_02021853).